Here is a 133-residue protein sequence, read N- to C-terminus: NADH dehydrogenase [ubiquinone] 1 alpha subcomplex subunit 6 (133 aa).

It belongs to the complex I LYR family. Complex I is composed of at least 49 different subunits.

It localises to the mitochondrion inner membrane. In terms of biological role, accessory subunit of the mitochondrial membrane respiratory chain NADH dehydrogenase (Complex I), that is believed to be not involved in catalysis. Complex I functions in the transfer of electrons from NADH to the respiratory chain. The immediate electron acceptor for the enzyme is believed to be ubiquinone. The polypeptide is NADH dehydrogenase [ubiquinone] 1 alpha subcomplex subunit 6 (Arabidopsis thaliana (Mouse-ear cress)).